The following is a 626-amino-acid chain: UvrABC system protein C (626 aa).

The GIY-YIG domain occupies 26-105; that stretch reads QEPGVYFMGD…IKQHQPHFNV (80 aa). In terms of domain architecture, UVR spans 215-250; it reads QELHQLLTQQMEKAAADLKFEQAALIRDQINSLGKL.

The protein belongs to the UvrC family. As to quaternary structure, interacts with UvrB in an incision complex.

The protein resides in the cytoplasm. Functionally, the UvrABC repair system catalyzes the recognition and processing of DNA lesions. UvrC both incises the 5' and 3' sides of the lesion. The N-terminal half is responsible for the 3' incision and the C-terminal half is responsible for the 5' incision. This chain is UvrABC system protein C, found in Synechocystis sp. (strain ATCC 27184 / PCC 6803 / Kazusa).